Reading from the N-terminus, the 392-residue chain is 8-amino-7-oxononanoate synthase (392 aa).

R19 is a substrate binding site. 106–107 (GY) lines the pyridoxal 5'-phosphate pocket. A substrate-binding site is contributed by H131. Positions 176, 204, and 233 each coordinate pyridoxal 5'-phosphate. The residue at position 236 (K236) is an N6-(pyridoxal phosphate)lysine. A substrate-binding site is contributed by T350.

This sequence belongs to the class-II pyridoxal-phosphate-dependent aminotransferase family. BioF subfamily. In terms of assembly, homodimer. Pyridoxal 5'-phosphate is required as a cofactor.

It catalyses the reaction 6-carboxyhexanoyl-[ACP] + L-alanine + H(+) = (8S)-8-amino-7-oxononanoate + holo-[ACP] + CO2. The protein operates within cofactor biosynthesis; biotin biosynthesis. Functionally, catalyzes the decarboxylative condensation of pimeloyl-[acyl-carrier protein] and L-alanine to produce 8-amino-7-oxononanoate (AON), [acyl-carrier protein], and carbon dioxide. The sequence is that of 8-amino-7-oxononanoate synthase from Pseudomonas fluorescens (strain ATCC BAA-477 / NRRL B-23932 / Pf-5).